Reading from the N-terminus, the 177-residue chain is Protein GrpE (177 aa).

Belongs to the GrpE family. Homodimer. Requires K(+) as cofactor.

Its subcellular location is the cytoplasm. Its function is as follows. Participates actively in the response to hyperosmotic and heat shock by preventing the aggregation of stress-denatured proteins, in association with DnaK and GrpE. It is the nucleotide exchange factor for DnaK and may function as a thermosensor. Unfolded proteins bind initially to DnaJ; upon interaction with the DnaJ-bound protein, DnaK hydrolyzes its bound ATP, resulting in the formation of a stable complex. GrpE releases ADP from DnaK; ATP binding to DnaK triggers the release of the substrate protein, thus completing the reaction cycle. Several rounds of ATP-dependent interactions between DnaJ, DnaK and GrpE are required for fully efficient folding. This Thermus thermophilus (strain ATCC 27634 / DSM 579 / HB8) protein is Protein GrpE.